Consider the following 255-residue polypeptide: Large ribosomal subunit protein uL4 (255 aa).

Belongs to the universal ribosomal protein uL4 family. In terms of assembly, part of the 50S ribosomal subunit.

In terms of biological role, one of the primary rRNA binding proteins, this protein initially binds near the 5'-end of the 23S rRNA. It is important during the early stages of 50S assembly. It makes multiple contacts with different domains of the 23S rRNA in the assembled 50S subunit and ribosome. Its function is as follows. Forms part of the polypeptide exit tunnel. The chain is Large ribosomal subunit protein uL4 from Thermoplasma acidophilum (strain ATCC 25905 / DSM 1728 / JCM 9062 / NBRC 15155 / AMRC-C165).